Here is a 499-residue protein sequence, read N- to C-terminus: Protein SENSITIVE TO PROTON RHIZOTOXICITY 1 (499 aa).

Residues 1 to 31 are disordered; sequence METEDDLCNTNWGSSSSKSREPGSSDCGNST. The C2H2-type 1 zinc-finger motif lies at 244–266; it reads HFCTICGKGFKRDANLRMHMRGH. The C2H2-type 2; atypical zinc finger occupies 354 to 385; it reads KHCGKNKWLCSCGTTFSRKDKLFGHIALFQGH. The tract at residues 390–436 is disordered; sequence PLEETKPSASTSTQRGSSEGGNNNQGMVGFNLGSASNANQETTQPGM. Polar residues-rich tracts occupy residues 396-415 and 422-435; these read PSASTSTQRGSSEGGNNNQG and GSASNANQETTQPG.

As to expression, expressed in roots (e.g. root tips and lateral roots), leaves, flowers (e.g. stigma, sepal, anther, and filament), stems, siliques and cotyledons.

It is found in the nucleus. Probable transcription factor. Together with STOP2, plays a critical role in tolerance to major stress factors in acid soils such as proton H(+) and aluminum ion Al(3+). Required for the expression of genes in response to acidic stress (e.g. ALMT1 and MATE), and Al-activated citrate exudation. The chain is Protein SENSITIVE TO PROTON RHIZOTOXICITY 1 from Arabidopsis thaliana (Mouse-ear cress).